The primary structure comprises 278 residues: HCLS1-associated protein X-1 (278 aa).

At S2 the chain carries N-acetylserine. Positions 2–43 are required for localization in mitochondria; the sequence is SVFDLFRGFFGFPGPRSHRDPFFGGMTRDDDDDEDDEEEEDS. Disordered stretches follow at residues 15-50 and 99-262; these read GPRS…GRES and LPSH…ALDD. A compositionally biased stretch (acidic residues) spans 30-43; that stretch reads DDDDDEDDEEEEDS. The involved in HCLS1 binding stretch occupies residues 113–278; that stretch reads TPGVRLREGQ…LLLGRWFRSR (166 aa). Positions 132–152 are enriched in basic and acidic residues; the sequence is PDSHQPRIFEGVLESHAKPES. Positions 174 to 205 are involved in CASP9 binding; it reads VSPHSRAREDKDLDSQVSQEGLGPLLQPQPKS. Residues 175 to 246 are involved in GNA13 binding; it reads SPHSRAREDK…TTVTHQEAHD (72 aa). Residues 182-278 are required for localization in sarcoplasmic reticulum; that stretch reads EDKDLDSQVS…LLLGRWFRSR (97 aa). Residues 183–278 are involved in PKD2 binding; that stretch reads DKDLDSQVSQ…LLLGRWFRSR (96 aa). 2 positions are modified to phosphoserine: S188 and S191. Residues 202 to 224 form an involved in PLN binding region; that stretch reads QPKSYFKSISVTKITKPDGTVEE. An involved in ATP2A2 binding region spans residues 202–244; the sequence is QPKSYFKSISVTKITKPDGTVEEHRTVVDSEGRRETTVTHQEA. The segment at 209 to 278 is mediates interaction with UCP3; it reads SISVTKITKP…LLLGRWFRSR (70 aa). Basic and acidic residues predominate over residues 216–254; that stretch reads TKPDGTVEEHRTVVDSEGRRETTVTHQEAHDSSRSDPDP. The segment at 269–278 is required for ITGB6 binding; the sequence is LLLGRWFRSR.

Belongs to the HAX1 family. As to quaternary structure, interacts with ABCB1, ABCB4 and ABCB11. Directly associates with HCLS1/HS1, through binding to its N-terminal region. Interacts with CTTN. Interacts with PKD2. Interacts with GNA13. Interacts with CASP9. Interacts with ITGB6. Interacts with PLN and ATP2A2; these interactions are inhibited by calcium. Interacts with GRB7. Interacts (via C-terminus) with XIAP/BIRC4 (via BIR 2 domain and BIR 3 domain) and this interaction blocks ubiquitination of XIAP/BIRC4. Interacts with TPC2. Interacts with KCNC3. Interacts with XPO1. Interacts with RNF217. Interacts with UCP3; the interaction is direct and calcium-dependent. Interacts with MAPRE2; this interaction regulates cell migration in keratinocytes. As to expression, present in striated muscles (at protein level).

It is found in the mitochondrion matrix. Its subcellular location is the endoplasmic reticulum. The protein localises to the nucleus membrane. It localises to the cytoplasmic vesicle. The protein resides in the cytoplasm. It is found in the cell cortex. Its subcellular location is the cell membrane. The protein localises to the sarcoplasmic reticulum. It localises to the P-body. The protein resides in the nucleus. Its function is as follows. Recruits the Arp2/3 complex to the cell cortex and regulates reorganization of the cortical actin cytoskeleton via its interaction with KCNC3 and the Arp2/3 complex. Slows down the rate of inactivation of KCNC3 channels. Promotes GNA13-mediated cell migration. Involved in the clathrin-mediated endocytosis pathway. May be involved in internalization of ABC transporters such as ABCB11. May inhibit CASP9 and CASP3. Promotes cell survival. May regulate intracellular calcium pools. The polypeptide is HCLS1-associated protein X-1 (Hax1) (Rattus norvegicus (Rat)).